A 113-amino-acid polypeptide reads, in one-letter code: U11-theraphotoxin-Hhn1a (113 aa).

The N-terminal stretch at 1–21 is a signal peptide; it reads MNTVRVTFLLVFVLAVSLGQA. Residues 22 to 74 constitute a propeptide that is removed on maturation; that stretch reads DKDENRMEMQEKTEQGKSYLDFAENLLLQKLEELEAKLLEEDSEESRNSRQRR. The disordered stretch occupies residues 61–83; the sequence is EEDSEESRNSRQRRCIGEGVPCD. 3 disulfides stabilise this stretch: C75-C90, C82-C95, and C89-C110.

It belongs to the neurotoxin 14 (magi-1) family. 01 (HNTX-16) subfamily. As to expression, expressed by the venom gland.

Its subcellular location is the secreted. Its function is as follows. Probable ion channel inhibitor. The chain is U11-theraphotoxin-Hhn1a from Cyriopagopus hainanus (Chinese bird spider).